The sequence spans 320 residues: MSLLRIRKPKTRKGKKVLLAREPQLIESARTMLFLDGRKCGGNVKLCMKDLQALKKPLVKVLNRKNDITPFDDPSSLEFLTMKNDAALFTFGSTSKKRPDNIILGRIFENEVLDMFELGIKRYQAISEFKNEKIGACVKPCLVFNGPKWAQTEELRRLRNLFIDTFQREKVDSIRLQGIEHVLSFTVTDDMNILMRSYRILLKKSGQRTPRIELEEIGPSADFSIRRTKIASEDLYKQARKQPKQLKVGKKKNISTDALGNTKGRVHLGKQQTGSIQTRRVKALRKTPEEKKENRQRKKVALKAAAAEALASQGNNPFSS.

The Brix domain occupies 30 to 234; the sequence is RTMLFLDGRK…IRRTKIASED (205 aa). The segment at 268–320 is disordered; it reads LGKQQTGSIQTRRVKALRKTPEEKKENRQRKKVALKAAAAEALASQGNNPFSS. Low complexity predominate over residues 302–311; that stretch reads LKAAAAEALA.

It belongs to the RPF2 family.

It localises to the nucleus. It is found in the nucleolus. In terms of biological role, required for normal assembly of the mitotic spindle. May be involved in both centrosome-dependent and centrosome-independent spindle assembly programs. The protein is Ribosome production factor 2 homolog of Drosophila melanogaster (Fruit fly).